Reading from the N-terminus, the 107-residue chain is MMKVLVVVALLVTLISYSSSEGIDDLEADELLSLMANEQTRKECIPKHHECTSNKHGCCRGNFFKYKCQCTTVVTQDGEQTERCFCGTPPHRKAAELVVGFGKKIFG.

The first 20 residues, 1–20, serve as a signal peptide directing secretion; that stretch reads MMKVLVVVALLVTLISYSSS. A propeptide spanning residues 21-41 is cleaved from the precursor; sequence EGIDDLEADELLSLMANEQTR. 4 cysteine pairs are disulfide-bonded: cysteine 44-cysteine 59, cysteine 51-cysteine 68, cysteine 58-cysteine 86, and cysteine 70-cysteine 84.

It belongs to the neurotoxin 19 (CSTX) family. 04 (U1-Lctx) subfamily. Expressed by the venom gland.

It localises to the secreted. The sequence is that of U1-lycotoxin-Ls1p from Lycosa singoriensis (Wolf spider).